Consider the following 434-residue polypeptide: Glutamate-1-semialdehyde 2,1-aminomutase (434 aa).

The residue at position 271 (Lys-271) is an N6-(pyridoxal phosphate)lysine.

Belongs to the class-III pyridoxal-phosphate-dependent aminotransferase family. HemL subfamily. Homodimer. Pyridoxal 5'-phosphate serves as cofactor.

Its subcellular location is the cytoplasm. It catalyses the reaction (S)-4-amino-5-oxopentanoate = 5-aminolevulinate. Its pathway is porphyrin-containing compound metabolism; protoporphyrin-IX biosynthesis; 5-aminolevulinate from L-glutamyl-tRNA(Glu): step 2/2. The protein operates within porphyrin-containing compound metabolism; chlorophyll biosynthesis. This is Glutamate-1-semialdehyde 2,1-aminomutase from Prochlorococcus marinus (strain MIT 9312).